The following is a 142-amino-acid chain: Large ribosomal subunit protein uL11 (142 aa).

Belongs to the universal ribosomal protein uL11 family. In terms of assembly, part of the ribosomal stalk of the 50S ribosomal subunit. Interacts with L10 and the large rRNA to form the base of the stalk. L10 forms an elongated spine to which L12 dimers bind in a sequential fashion forming a multimeric L10(L12)X complex. Post-translationally, one or more lysine residues are methylated.

Its function is as follows. Forms part of the ribosomal stalk which helps the ribosome interact with GTP-bound translation factors. This chain is Large ribosomal subunit protein uL11, found in Yersinia pestis bv. Antiqua (strain Angola).